A 226-amino-acid chain; its full sequence is Peroxynitrite isomerase 2 (226 aa).

Residues 73–79 (GVWRGEG) carry the GXWXGXG motif. The heme b site is built by Lys189 and His216.

The protein belongs to the nitrobindin family. In terms of assembly, homodimer. It depends on heme b as a cofactor.

The enzyme catalyses peroxynitrite = nitrate. It participates in nitrogen metabolism. In terms of biological role, heme-binding protein able to scavenge peroxynitrite and to protect free L-tyrosine against peroxynitrite-mediated nitration, by acting as a peroxynitrite isomerase that converts peroxynitrite to nitrate. Therefore, this protein likely plays a role in peroxynitrite sensing and in the detoxification of reactive nitrogen and oxygen species (RNS and ROS, respectively). Is able to bind nitric oxide (NO) in vitro, but may act as a sensor of peroxynitrite levels in vivo. This chain is Peroxynitrite isomerase 2, found in Mycobacterium bovis (strain ATCC BAA-935 / AF2122/97).